The chain runs to 227 residues: Potassium/proton antiporter CemA (227 aa).

The next 4 membrane-spanning stretches (helical) occupy residues 5 to 25 (SISLLYLISIVFLPWCISFTF), 112 to 132 (IICFFILSGYSILGNQELILI), 143 to 163 (LSDTIKAFSILLLTDLCIGFH), and 187 to 207 (IISGLVSTFPVILDTIFKYWI).

It belongs to the CemA family.

It localises to the plastid. The protein localises to the chloroplast inner membrane. The catalysed reaction is K(+)(in) + H(+)(out) = K(+)(out) + H(+)(in). Functionally, contributes to K(+)/H(+) antiport activity by supporting proton efflux to control proton extrusion and homeostasis in chloroplasts in a light-dependent manner to modulate photosynthesis. Prevents excessive induction of non-photochemical quenching (NPQ) under continuous-light conditions. Indirectly promotes efficient inorganic carbon uptake into chloroplasts. The chain is Potassium/proton antiporter CemA from Phaseolus vulgaris (Kidney bean).